Reading from the N-terminus, the 389-residue chain is MFTLFLLIALSSAKVYFHETFENRDKWIDSTSSGKALGPFKIVSGKWYGDANNKGLQTSEDNKFYIAAAKLDEEFSNKDKNLIVQYNLKFEQGIDCGGGYIKLLPKKSIESEEKFTPESEYNIMFGPDVCGGSKRTHVIMNYKGKNNLIRKEIKCESDDISHLYTLIIRPNNTYVVKIDGVEKQEGKFDEDWDMLAPKEIDDPNVSKPADWVDEKEIDDPNDKKPEGWDDIPKTIVDPNAKKPEEWNDEDDGEWEAPTIENPEYKGEWKPKRIPNPAYKGEWVHPQIANPDYVYDPELYKYDSFAYIGIDVWQVKAGTIYDDILITDDIEEAEKEAKVILERNAAEKKMRDEIKEAEKQKEEEAKKEAEKQKEEETKEEIKKEENKEEL.

A signal peptide spans 1–13 (MFTLFLLIALSSA). Residues 12–189 (SAKVYFHETF…GVEKQEGKFD (178 aa)) are N-domain. Ca(2+)-binding residues include Thr-20, Asn-52, and Asn-53. Cys-96 and Cys-130 are oxidised to a cystine. Residues Tyr-100, Lys-102, Tyr-121, and Asp-128 each contribute to the an alpha-D-glucoside site. 7 consecutive repeat copies span residues 183-194 (KQEGKFDEDWDM), 202-213 (DPNVSKPADWVD), 219-230 (DPNDKKPEGWDD), 237-248 (DPNAKKPEEWND), 252-262 (GEWEAPTIENP), 266-276 (GEWKPKRIPNP), and 280-290 (GEWVHPQIANP). A 4 X approximate repeats region spans residues 183 to 248 (KQEGKFDEDW…NAKKPEEWND (66 aa)). Residues 190–301 (EDWDMLAPKE…YVYDPELYKY (112 aa)) form a P-domain region. The segment covering 213–232 (DEKEIDDPNDKKPEGWDDIP) has biased composition (basic and acidic residues). A disordered region spans residues 213-256 (DEKEIDDPNDKKPEGWDDIPKTIVDPNAKKPEEWNDEDDGEWEA). The 3 X approximate repeats stretch occupies residues 252–290 (GEWEAPTIENPEYKGEWKPKRIPNPAYKGEWVHPQIANP). The C-domain stretch occupies residues 302 to 389 (DSFAYIGIDV…IKKEENKEEL (88 aa)). Asp-310 lines the an alpha-D-glucoside pocket. Asp-321 is a Ca(2+) binding site. The stretch at 329–388 (IEEAEKEAKVILERNAAEKKMRDEIKEAEKQKEEEAKKEAEKQKEEETKEEIKKEENKEE) forms a coiled coil. The interval 347–389 (KKMRDEIKEAEKQKEEEAKKEAEKQKEEETKEEIKKEENKEEL) is disordered. The short motif at 386–389 (KEEL) is the Prevents secretion from ER element.

It belongs to the calreticulin family. As to quaternary structure, interacts (via C-terminus) with host C1q.

Its subcellular location is the endoplasmic reticulum lumen. It localises to the cell projection. The protein resides in the uropodium. It is found in the cell surface. The protein localises to the phagocytic cup. Its function is as follows. Molecular calcium-binding chaperone promoting folding, oligomeric assembly and quality control in the ER via the calreticulin/calnexin cycle. This lectin may interact transiently with almost all of the monoglucosylated glycoproteins that are synthesized in the ER. Plays a role in host cell phagocytosis, possibly by acting as a receptor for host C1q. Binding to C1q prevents the activation of the host classical complement pathway. Also, binds to apoptotic host cells independently of host C1q and collectins. In Entamoeba histolytica (strain ATCC 30459 / HM-1:IMSS / ABRM), this protein is Calreticulin.